A 1181-amino-acid polypeptide reads, in one-letter code: HEAT repeat-containing protein 6 (1181 aa).

The HEAT 1 repeat unit spans residues 159–198; that stretch reads PELLGNTGLLMKLSDLAQSDPEVRRAAVHCMANLCLSVPG. 2 disordered regions span residues 292–347 and 371–390; these read QYDG…PVTG and LDGS…SSSS. The span at 300-312 shows a compositional bias: polar residues; it reads KPQQSESSASRPT. A compositionally biased stretch (basic residues) spans 313-325; it reads LNKKKKSKVKPKK. Phosphoserine occurs at positions 336 and 337. Residues Ser399 and Ser402 each carry the phosphoserine modification. HEAT repeat units lie at residues 452-490, 515-552, and 558-595; these read ELGS…GSKQ, SIRE…NAPY, and SLLT…THAP. Residues 613–646 form a disordered region; sequence NSNSATPHLSPPDWWKKAPAGPSLEETSVSSPKG. Phosphothreonine is present on Thr618. Positions 637–646 are enriched in polar residues; the sequence is EETSVSSPKG. Ser643 bears the Phosphoserine mark.

In terms of tissue distribution, amplified in breast cancer cell lines MCF-7 and BT-474.

Functionally, amplification-dependent oncogene. In Homo sapiens (Human), this protein is HEAT repeat-containing protein 6 (HEATR6).